The primary structure comprises 237 residues: Neural retina-specific leucine zipper protein (237 aa).

Residues Lys20 and Lys24 each participate in a glycyl lysine isopeptide (Lys-Gly) (interchain with G-Cter in SUMO) cross-link. The segment at 26–64 (EPSEGRSGVPTASLGSTPYSSVPPSPTFSEPGMVGGGEA) is disordered. The tract at residues 30-93 (GRSGVPTASL…SDEVLGLSPD (64 aa)) is minimal transactivation domain (MTD). The interval 159–185 (RLKQRRRTLKNRGYAQACRSKRLQQRR) is basic motif. The 64-residue stretch at 159 to 222 (RLKQRRRTLK…DLYKARCDRL (64 aa)) folds into the bZIP domain. A leucine-zipper region spans residues 187-208 (LEAERARLAAQLDALRAEVARL).

This sequence belongs to the bZIP family. Interacts with FIZ1; this interaction represses transactivation. Interacts (via the leucine-zipper domain) with CRX. In terms of processing, disumoylated at Lys-20. Sumoylation modulates the transcriptional activity of NRL on RHO and NR2E3 promoters, and is required for normal rod differentiation. Phosphorylated. Expressed in the retina (at protein level).

The protein resides in the cytoplasm. The protein localises to the nucleus. Functionally, acts as a transcriptional activator which regulates the expression of several rod-specific genes, including RHO and PDE6B. Also functions as a transcriptional coactivator, stimulating transcription mediated by the transcription factor CRX and NR2E3. Binds to the rhodopsin promoter in a sequence-specific manner. This chain is Neural retina-specific leucine zipper protein (Nrl), found in Mus musculus (Mouse).